A 170-amino-acid polypeptide reads, in one-letter code: Adenine phosphoribosyltransferase (170 aa).

Belongs to the purine/pyrimidine phosphoribosyltransferase family. As to quaternary structure, homodimer.

It localises to the cytoplasm. The catalysed reaction is AMP + diphosphate = 5-phospho-alpha-D-ribose 1-diphosphate + adenine. The protein operates within purine metabolism; AMP biosynthesis via salvage pathway; AMP from adenine: step 1/1. Its function is as follows. Catalyzes a salvage reaction resulting in the formation of AMP, that is energically less costly than de novo synthesis. This is Adenine phosphoribosyltransferase from Bacillus anthracis (strain A0248).